The chain runs to 395 residues: ASTRA-associated protein 1 (395 aa).

WD repeat units lie at residues 7–48 (AHVS…PIAS), 221–260 (HYPEPVLSLAHDRTERRVFSSSTTDQVCVHNIPTPDLPVV), and 343–386 (INPG…TGYN).

It belongs to the WD repeat ASA1 family. Component of the ASTRA chromatin remodeling machinery complex.

The protein resides in the nucleus. Functionally, component of the ASTRA complex involved in chromatin remodeling. The chain is ASTRA-associated protein 1 (ASA1) from Eremothecium gossypii (strain ATCC 10895 / CBS 109.51 / FGSC 9923 / NRRL Y-1056) (Yeast).